The following is a 74-amino-acid chain: Ubiquitin-like protein FUBI (74 aa).

Belongs to the ubiquitin family.

The polypeptide is Ubiquitin-like protein FUBI (Fau) (Mus spicilegus (Steppe mouse)).